The chain runs to 360 residues: (+)-6a-hydroxymaackiain 3-O-methyltransferase 1 (360 aa).

Residues 202–205 (VAGG), D226, 226–227 (DQ), 246–247 (DM), and K260 each bind S-adenosyl-L-methionine. The active-site Proton acceptor is the H264.

It belongs to the class I-like SAM-binding methyltransferase superfamily. Cation-independent O-methyltransferase family. COMT subfamily.

It catalyses the reaction (+)-6a-hydroxymaackiain + S-adenosyl-L-methionine = (+)-pisatin + S-adenosyl-L-homocysteine + H(+). It carries out the reaction a 4'-hydroxyisoflavone + S-adenosyl-L-methionine = a 4'-methoxyisoflavone + S-adenosyl-L-homocysteine + H(+). Functionally, methyltransferase involved in the phytoalexin pisatin biosynthesis. Has both 3- and 4'-O-methyltransferase activities. Can use (+)-6a-hydroxymaackiain, 2,7,4'-trihydroxyisoflavanone and with much less activity (+)-medicarpin as substrates, but not (-)-6a-hydroxymaackiain, daidzein, formononetin or isoliquiritigenin. May be involved in formononetin biosynthesis. The polypeptide is (+)-6a-hydroxymaackiain 3-O-methyltransferase 1 (HMM1) (Pisum sativum (Garden pea)).